The chain runs to 220 residues: Guanylate kinase (220 aa).

In terms of domain architecture, Guanylate kinase-like spans 16–195 (GLMFVLSSPS…AFESVRSILR (180 aa)). 23 to 30 (SPSGAGKT) serves as a coordination point for ATP.

Belongs to the guanylate kinase family.

Its subcellular location is the cytoplasm. The enzyme catalyses GMP + ATP = GDP + ADP. Its function is as follows. Essential for recycling GMP and indirectly, cGMP. The chain is Guanylate kinase from Rhodopseudomonas palustris (strain ATCC BAA-98 / CGA009).